The sequence spans 75 residues: Neuropeptide-like protein 31 (75 aa).

The first 22 residues, 1–22 (MISTSSILVLVVLLACFMAANA), serve as a signal peptide directing secretion. Residues Y29, Y39, Y49, Y56, and Y64 each carry the tyrosine amide modification. W73 is subject to Tryptophan amide.

It belongs to the YARP (YGGW-amide related peptide) family. In terms of tissue distribution, expressed in hypoderm.

It is found in the secreted. Antimicrobial peptides that have antifungal activity against D.coniospora. Has weak antibacterial activity against Gram-positive bacteria M.luteus and Gram-negative E.coli. The polypeptide is Neuropeptide-like protein 31 (nlp-31) (Caenorhabditis elegans).